The chain runs to 116 residues: Large ribosomal subunit protein bL20 (116 aa).

This sequence belongs to the bacterial ribosomal protein bL20 family.

In terms of biological role, binds directly to 23S ribosomal RNA and is necessary for the in vitro assembly process of the 50S ribosomal subunit. It is not involved in the protein synthesizing functions of that subunit. In Mycoplasmopsis agalactiae (strain NCTC 10123 / CIP 59.7 / PG2) (Mycoplasma agalactiae), this protein is Large ribosomal subunit protein bL20.